The sequence spans 155 residues: Small ribosomal subunit protein uS7cz/uS7cy (155 aa).

Belongs to the universal ribosomal protein uS7 family. In terms of assembly, part of the 30S ribosomal subunit.

It is found in the plastid. One of the primary rRNA binding proteins, it binds directly to 16S rRNA where it nucleates assembly of the head domain of the 30S subunit. The chain is Small ribosomal subunit protein uS7cz/uS7cy (rps7-A) from Cuscuta exaltata (Tall dodder).